The chain runs to 78 residues: Protein EcdD (78 aa).

Involved in the non-oxidative decarboxylation and detoxification of phenolic derivatives under anaerobic conditions, however the precise biochemical function in metabolism of phenolic acid is unknown. In Escherichia coli O157:H7, this protein is Protein EcdD.